A 151-amino-acid polypeptide reads, in one-letter code: Macrodomain Ter protein (151 aa).

The protein belongs to the MatP family. In terms of assembly, homodimer.

The protein localises to the cytoplasm. Required for spatial organization of the terminus region of the chromosome (Ter macrodomain) during the cell cycle. Prevents early segregation of duplicated Ter macrodomains during cell division. Binds specifically to matS, which is a 13 bp signature motif repeated within the Ter macrodomain. The protein is Macrodomain Ter protein of Yersinia pseudotuberculosis serotype IB (strain PB1/+).